The chain runs to 1134 residues: Phospholipid-transporting ATPase IH (1134 aa).

Residues Met1 to Ile61 lie on the Cytoplasmic side of the membrane. Residues Pro62–Leu82 form a helical membrane-spanning segment. The Extracellular portion of the chain corresponds to Val83–Asp88. A helical transmembrane segment spans residues Thr89–Lys110. Residues Gln111 to Phe296 are Cytoplasmic-facing. Residues Leu297–Trp318 form a helical membrane-spanning segment. Over Gln319–Phe349 the chain is Extracellular. Residues Leu350–Lys372 form a helical membrane-spanning segment. The Cytoplasmic portion of the chain corresponds to Phe373–Glu881. Asp414 (4-aspartylphosphate intermediate) is an active-site residue. The ATP site is built by Asp414, Lys415, Thr416, Glu511, Phe553, Lys576, Arg607, Thr687, Gly688, and Asp689. Asp414 serves as a coordination point for Mg(2+). Residue Thr416 coordinates Mg(2+). A Phosphoserine modification is found at Ser738. Arg798 and Lys804 together coordinate ATP. Asp825 is a binding site for Mg(2+). Asn828 and Asp829 together coordinate ATP. Asp829 contacts Mg(2+). A helical transmembrane segment spans residues Leu882–Phe902. Over Phe903–Thr914 the chain is Extracellular. Residues Ala915–Leu934 traverse the membrane as a helical segment. Over Met935–Val964 the chain is Cytoplasmic. Residues Phe965–Val986 form a helical membrane-spanning segment. Topologically, residues Phe987 to Gly1000 are extracellular. Residues Asn1001–Asp1023 traverse the membrane as a helical segment. At Thr1024–Trp1029 the chain is on the cytoplasmic side. A helical membrane pass occupies residues Ile1030–Gly1050. Topologically, residues Gly1051–Gln1068 are extracellular. The chain crosses the membrane as a helical span at residues Met1069–Lys1093. Residues Lys1094 to Phe1134 are Cytoplasmic-facing.

The protein belongs to the cation transport ATPase (P-type) (TC 3.A.3) family. Type IV subfamily. In terms of assembly, component of a P4-ATPase flippase complex which consists of a catalytic alpha subunit ATP11A and an accessory beta subunit TMEM30A. Mg(2+) is required as a cofactor. Proteolytically cleaved by CASP3. As to expression, widely expressed. Expressed in myoblasts.

The protein resides in the cell membrane. Its subcellular location is the early endosome. It localises to the recycling endosome. The protein localises to the endoplasmic reticulum membrane. It catalyses the reaction ATP + H2O + phospholipidSide 1 = ADP + phosphate + phospholipidSide 2.. It carries out the reaction a 1,2-diacyl-sn-glycero-3-phospho-L-serine(out) + ATP + H2O = a 1,2-diacyl-sn-glycero-3-phospho-L-serine(in) + ADP + phosphate + H(+). The enzyme catalyses a 1,2-diacyl-sn-glycero-3-phosphoethanolamine(out) + ATP + H2O = a 1,2-diacyl-sn-glycero-3-phosphoethanolamine(in) + ADP + phosphate + H(+). With respect to regulation, the flippase activity is inactivated by caspase-mediated cleavage in apoptotic cells, allowing for PS exposure on the cell surface and engulfment of apoptotic cells by macrophages. The ATPase activity is up-regulated by aminophospholipids PS and PE and down-regulated by increasing intracellular Ca2+ levels. Catalytic component of a P4-ATPase flippase complex which catalyzes the hydrolysis of ATP coupled to the transport of aminophospholipids, phosphatidylserines (PS) and phosphatidylethanolamines (PE), from the outer to the inner leaflet of the plasma membrane. Does not show flippase activity toward phosphatidylcholine (PC). Contributes to the maintenance of membrane lipid asymmetry with a specific role in morphogenesis of muscle cells. In myoblasts, mediates PS enrichment at the inner leaflet of plasma membrane, triggering PIEZO1-dependent Ca2+ influx and Rho GTPases signal transduction, subsequently leading to the assembly of cortical actomyosin fibers and myotube formation. May be involved in the uptake of farnesyltransferase inhibitor drugs, such as lonafarnib. The chain is Phospholipid-transporting ATPase IH (ATP11A) from Homo sapiens (Human).